Reading from the N-terminus, the 143-residue chain is Transcriptional regulator MraZ (143 aa).

2 consecutive SpoVT-AbrB domains span residues 5-47 and 76-119; these read THHP…PRAE and TDEQ…NAER.

Belongs to the MraZ family. Forms oligomers.

It is found in the cytoplasm. The protein localises to the nucleoid. This chain is Transcriptional regulator MraZ, found in Saccharopolyspora erythraea (strain ATCC 11635 / DSM 40517 / JCM 4748 / NBRC 13426 / NCIMB 8594 / NRRL 2338).